We begin with the raw amino-acid sequence, 315 residues long: uncharacterized protein (315 aa).

Over methionine 1–serine 38 the chain is Cytoplasmic. The helical transmembrane segment at isoleucine 39–proline 59 threads the bilayer. Residues histidine 60–serine 101 are Lumenal-facing. One can recognise a TLC domain in the interval serine 95 to lysine 302. A helical transmembrane segment spans residues valine 102 to leucine 122. The Cytoplasmic segment spans residues aspartate 123–aspartate 144. Residues threonine 145–methionine 165 form a helical membrane-spanning segment. At tyrosine 166–proline 170 the chain is on the lumenal side. A helical membrane pass occupies residues phenylalanine 171 to isoleucine 190. Residues glutamine 191–serine 225 are Cytoplasmic-facing. A helical transmembrane segment spans residues leucine 226–tryptophan 246. At glycine 247–glutamate 264 the chain is on the lumenal side. The helical transmembrane segment at proline 265 to leucine 285 threads the bilayer. Over asparagine 286–glutamine 315 the chain is Cytoplasmic.

The protein localises to the endoplasmic reticulum membrane. This is an uncharacterized protein from Saccharomyces cerevisiae (strain ATCC 204508 / S288c) (Baker's yeast).